A 513-amino-acid chain; its full sequence is tRNA A64-2'-O-ribosylphosphate transferase (513 aa).

Functionally, tRNA backbone modifying enzyme that mediates initiator/ elongator tRNA discrimination. This enzyme modifies exclusively the initiator tRNA in position 64 using 5'-phosphoribosyl-1'-pyrophosphate as the modification donor. Recognize the stem-loop IV region that is unique in eukaryotic cytoplasmic initiator tRNAs. The protein is tRNA A64-2'-O-ribosylphosphate transferase (RIT1) of Saccharomyces cerevisiae (strain ATCC 204508 / S288c) (Baker's yeast).